A 121-amino-acid chain; its full sequence is Flagellar protein FliT (121 aa).

The tract at residues methionine 1–leucine 50 is required for homodimerization. The tract at residues methionine 60–valine 98 is fliD binding.

This sequence belongs to the FliT family. As to quaternary structure, homodimer. Interacts with FliD and FlhC.

Its subcellular location is the cytoplasm. The protein localises to the cytosol. Dual-function protein that regulates the transcription of class 2 flagellar operons and that also acts as an export chaperone for the filament-capping protein FliD. As a transcriptional regulator, acts as an anti-FlhDC factor; it directly binds FlhC, thus inhibiting the binding of the FlhC/FlhD complex to class 2 promoters, resulting in decreased expression of class 2 flagellar operons. As a chaperone, effects FliD transition to the membrane by preventing its premature polymerization, and by directing it to the export apparatus. This Escherichia coli (strain ATCC 8739 / DSM 1576 / NBRC 3972 / NCIMB 8545 / WDCM 00012 / Crooks) protein is Flagellar protein FliT.